Here is a 186-residue protein sequence, read N- to C-terminus: Protein TRL14 (186 aa).

Residues Asn-24, Asn-64, and Asn-72 are each glycosylated (N-linked (GlcNAc...) asparagine; by host). A helical membrane pass occupies residues 143–163 (HAVWAGVVVSVALIALYMGSH).

Belongs to the RL11 family.

It is found in the virion membrane. This Human cytomegalovirus (strain AD169) (HHV-5) protein is Protein TRL14.